A 307-amino-acid polypeptide reads, in one-letter code: MGLAAPRKKTKISHDPNNTSWSRSTDGFGHRILKAQGWTPGGFLGARNATHSDLFTTASASHIRVVLKDDTLGLGARPKRNLLDGPTGLDAFKGLLGRLNGKSDTQLEAEQQKRDDAKLARYAATKWQTVRFISGGLLVQEKDNATASPASQDLRVDFPRETSSHESENGMFKMEPMDSDSQEGGCATAKEEEGKKKEKKKKNKKGKELDMSSRKSREKKQEKRQKKRKISDCDGLDAETANRTSTNVLVAVANDKGTCLLASNGPATSRERQPMGRRIFRSRHIEQKKRALMDDKSLNEVFIILSH.

The segment covering 1 to 11 (MGLAAPRKKTK) has biased composition (basic residues). Disordered regions lie at residues 1–25 (MGLA…SRST) and 144–234 (NATA…SDCD). Residues 15 to 25 (DPNNTSWSRST) are compositionally biased toward polar residues. Residues 25–79 (TDGFGHRILKAQGWTPGGFLGARNATHSDLFTTASASHIRVVLKDDTLGLGARPK) form the G-patch domain. 2 stretches are compositionally biased toward basic and acidic residues: residues 154–168 (LRVD…HESE) and 206–221 (GKEL…EKKQ).

It belongs to the PINX1 family.

It is found in the nucleus. Its subcellular location is the nucleolus. Involved in rRNA-processing at A0, A1 and A2 sites and negatively regulates telomerase. This is Protein pxr1 (pxr1) from Neosartorya fischeri (strain ATCC 1020 / DSM 3700 / CBS 544.65 / FGSC A1164 / JCM 1740 / NRRL 181 / WB 181) (Aspergillus fischerianus).